Here is a 359-residue protein sequence, read N- to C-terminus: MIAIPSDRLDAILARHDIVTATLSAGEADSESFVQLSRELSDLDDVVAAIRAYRAAEAELRGVEAMLQEGDPEMRALAAEEKPEVEAARDAAAKALQIMLLPKDAADEKSAILEIRAGTGGDEAALFAGDLLRMYARYADLKGWKIEVVSESPGTMGGYREVVAEVKGRGVFARLKFESGAHRVQRVPETETQGRIHTSAATVAVLPEAEEVDIHVNEADLKIDTMRAQGAGGQHVNKTESAIRITHIPSGIVVFVQEERSQHKNRARAMAVLRARLYEQERSQKDAARAADRRAQVGSGDRSERIRTYNFPQGRVTDHRINLTLYKLEEVLAGTALDELVDALVTEHQAALLAAEGLG.

Position 234 is an N5-methylglutamine (glutamine 234). The tract at residues 283-305 is disordered; sequence SQKDAARAADRRAQVGSGDRSER.

The protein belongs to the prokaryotic/mitochondrial release factor family. In terms of processing, methylated by PrmC. Methylation increases the termination efficiency of RF1.

The protein resides in the cytoplasm. In terms of biological role, peptide chain release factor 1 directs the termination of translation in response to the peptide chain termination codons UAG and UAA. The polypeptide is Peptide chain release factor 1 (Methylobacterium sp. (strain 4-46)).